The primary structure comprises 76 residues: UPF0291 protein BPUM_1689 (76 aa).

Disordered stretches follow at residues 1–31 (MISKNQLARINELSKKSKETGLSDAEKTEQK) and 56–76 (DPEGNDVTPEKLKRERDQNLH). Basic and acidic residues-rich tracts occupy residues 12-31 (ELSKKSKETGLSDAEKTEQK) and 63-76 (TPEKLKRERDQNLH).

The protein belongs to the UPF0291 family.

The protein localises to the cytoplasm. In Bacillus pumilus (strain SAFR-032), this protein is UPF0291 protein BPUM_1689.